The primary structure comprises 359 residues: Phospho-N-acetylmuramoyl-pentapeptide-transferase (359 aa).

Transmembrane regions (helical) follow at residues 3-23 (QILF…PVLI), 53-73 (GGVA…LIGI), 84-104 (GLLV…DDFI), 117-137 (TAKL…ALQF), 156-176 (IATV…LVSA), 187-207 (LDGL…IITF), 231-251 (LALI…WNAA), 255-275 (IFMG…LSIT), 283-303 (VVIG…VAVF), and 330-350 (VIIR…ALFY).

It belongs to the glycosyltransferase 4 family. MraY subfamily. Mg(2+) serves as cofactor.

Its subcellular location is the cell membrane. It catalyses the reaction UDP-N-acetyl-alpha-D-muramoyl-L-alanyl-gamma-D-glutamyl-meso-2,6-diaminopimeloyl-D-alanyl-D-alanine + di-trans,octa-cis-undecaprenyl phosphate = di-trans,octa-cis-undecaprenyl diphospho-N-acetyl-alpha-D-muramoyl-L-alanyl-D-glutamyl-meso-2,6-diaminopimeloyl-D-alanyl-D-alanine + UMP. Its pathway is cell wall biogenesis; peptidoglycan biosynthesis. Functionally, catalyzes the initial step of the lipid cycle reactions in the biosynthesis of the cell wall peptidoglycan: transfers peptidoglycan precursor phospho-MurNAc-pentapeptide from UDP-MurNAc-pentapeptide onto the lipid carrier undecaprenyl phosphate, yielding undecaprenyl-pyrophosphoryl-MurNAc-pentapeptide, known as lipid I. This is Phospho-N-acetylmuramoyl-pentapeptide-transferase from Rhodococcus opacus (strain B4).